A 318-amino-acid polypeptide reads, in one-letter code: Biotin synthase (318 aa).

The 230-residue stretch at 44 to 273 folds into the Radical SAM core domain; that stretch reads LCGKKFNLCT…EKQIRLAGGR (230 aa). Residues C62, C66, and C69 each contribute to the [4Fe-4S] cluster site. [2Fe-2S] cluster contacts are provided by S106, C138, C198, and R268.

Belongs to the radical SAM superfamily. Biotin synthase family. Homodimer. Requires [4Fe-4S] cluster as cofactor. [2Fe-2S] cluster serves as cofactor.

It carries out the reaction (4R,5S)-dethiobiotin + (sulfur carrier)-SH + 2 reduced [2Fe-2S]-[ferredoxin] + 2 S-adenosyl-L-methionine = (sulfur carrier)-H + biotin + 2 5'-deoxyadenosine + 2 L-methionine + 2 oxidized [2Fe-2S]-[ferredoxin]. It participates in cofactor biosynthesis; biotin biosynthesis; biotin from 7,8-diaminononanoate: step 2/2. In terms of biological role, catalyzes the conversion of dethiobiotin (DTB) to biotin by the insertion of a sulfur atom into dethiobiotin via a radical-based mechanism. This chain is Biotin synthase, found in Clostridium botulinum (strain Alaska E43 / Type E3).